Consider the following 123-residue polypeptide: Small ribosomal subunit protein uS12 (123 aa).

Residue aspartate 89 is modified to 3-methylthioaspartic acid.

The protein belongs to the universal ribosomal protein uS12 family. Part of the 30S ribosomal subunit. Contacts proteins S8 and S17. May interact with IF1 in the 30S initiation complex.

Functionally, with S4 and S5 plays an important role in translational accuracy. Interacts with and stabilizes bases of the 16S rRNA that are involved in tRNA selection in the A site and with the mRNA backbone. Located at the interface of the 30S and 50S subunits, it traverses the body of the 30S subunit contacting proteins on the other side and probably holding the rRNA structure together. The combined cluster of proteins S8, S12 and S17 appears to hold together the shoulder and platform of the 30S subunit. The protein is Small ribosomal subunit protein uS12 of Myxococcus xanthus.